Reading from the N-terminus, the 251-residue chain is Adenosylcobinamide-GDP ribazoletransferase (251 aa).

7 consecutive transmembrane segments (helical) span residues Leu-36–Ser-56, Val-60–Leu-80, Val-110–Phe-130, Val-141–Glu-161, Glu-181–Ile-201, Asn-202–Lys-222, and Asp-231–Ile-251.

It belongs to the CobS family. It depends on Mg(2+) as a cofactor.

The protein resides in the cell membrane. It carries out the reaction alpha-ribazole + adenosylcob(III)inamide-GDP = adenosylcob(III)alamin + GMP + H(+). It catalyses the reaction alpha-ribazole 5'-phosphate + adenosylcob(III)inamide-GDP = adenosylcob(III)alamin 5'-phosphate + GMP + H(+). The protein operates within cofactor biosynthesis; adenosylcobalamin biosynthesis; adenosylcobalamin from cob(II)yrinate a,c-diamide: step 7/7. In terms of biological role, joins adenosylcobinamide-GDP and alpha-ribazole to generate adenosylcobalamin (Ado-cobalamin). Also synthesizes adenosylcobalamin 5'-phosphate from adenosylcobinamide-GDP and alpha-ribazole 5'-phosphate. This Clostridium perfringens (strain 13 / Type A) protein is Adenosylcobinamide-GDP ribazoletransferase.